Consider the following 369-residue polypeptide: Molybdenum import ATP-binding protein ModC (369 aa).

An ABC transporter domain is found at 7–243; sequence PGQAGIHARF…LDLPMAMTDD (237 aa). 41–48 lines the ATP pocket; sequence GQSGSGKT. The 66-residue stretch at 304–369 folds into the Mop domain; it reads EGSILNVLAV…AQIKAVSLLA (66 aa).

This sequence belongs to the ABC transporter superfamily. Molybdate importer (TC 3.A.1.8) family. As to quaternary structure, the complex is composed of two ATP-binding proteins (ModC), two transmembrane proteins (ModB) and a solute-binding protein (ModA).

It localises to the cell inner membrane. The enzyme catalyses molybdate(out) + ATP + H2O = molybdate(in) + ADP + phosphate + H(+). Part of the ABC transporter complex ModABC involved in molybdenum import. Responsible for energy coupling to the transport system. The protein is Molybdenum import ATP-binding protein ModC of Bordetella bronchiseptica (strain ATCC BAA-588 / NCTC 13252 / RB50) (Alcaligenes bronchisepticus).